A 129-amino-acid chain; its full sequence is Small ribosomal subunit protein uS11 (129 aa).

The protein belongs to the universal ribosomal protein uS11 family. In terms of assembly, part of the 30S ribosomal subunit. Interacts with proteins S7 and S18. Binds to IF-3.

Functionally, located on the platform of the 30S subunit, it bridges several disparate RNA helices of the 16S rRNA. Forms part of the Shine-Dalgarno cleft in the 70S ribosome. This chain is Small ribosomal subunit protein uS11, found in Erythrobacter litoralis (strain HTCC2594).